Here is a 393-residue protein sequence, read N- to C-terminus: Calreticulin (393 aa).

Residues 1–16 (MLSILLTLLLSKYALG) form the signal peptide. A glycan (N-linked (GlcNAc...) asparagine) is linked at N27. A disulfide bridge connects residues C103 and C135. An alpha-D-glucoside-binding residues include Y107, K109, Y126, and D133. 7 tandem repeats follow at residues 189–200 (VEEGSLEDDWDM), 208–219 (DPNDKKPDDWVD), 225–236 (DPDDKKPDNWDQ), 242–253 (DMDAKKPDDWDD), 257–267 (GEWERPQKDNP), 271–281 (GEWTPRRIDNP), and 285–295 (GEWKPVQIDNP). Residues 189-253 (VEEGSLEDDW…DAKKPDDWDD (65 aa)) form a 4 X 12 AA approximate repeats region. The interval 194–277 (LEDDWDMLPP…EYKGEWTPRR (84 aa)) is disordered. Basic and acidic residues predominate over residues 202 to 216 (PPKKIDDPNDKKPDD). The span at 217 to 226 (WVDEQFIDDP) shows a compositional bias: acidic residues. Composition is skewed to basic and acidic residues over residues 227–249 (DDKK…KKPD) and 258–277 (EWER…TPRR). The segment at 257 to 295 (GEWERPQKDNPEYKGEWTPRRIDNPKYKGEWKPVQIDNP) is 3 X 11 AA approximate repeats. D315 contributes to the an alpha-D-glucoside binding site. The disordered stretch occupies residues 351 to 393 (AEVAKEQSSAKDDKEEAEETKERKELPYDAKASDEPSGDHDEL). The Prevents secretion from ER motif lies at 390–393 (HDEL).

It belongs to the calreticulin family.

It localises to the endoplasmic reticulum lumen. Its function is as follows. Molecular calcium-binding chaperone promoting folding, oligomeric assembly and quality control in the ER via the calreticulin/calnexin cycle. This lectin may interact transiently with almost all of the monoglucosylated glycoproteins that are synthesized in the ER. In Schistosoma mansoni (Blood fluke), this protein is Calreticulin.